We begin with the raw amino-acid sequence, 658 residues long: Translation factor GUF1, mitochondrial (658 aa).

The N-terminal 40 residues, 1–40 (MRGCLQTVRWLTSAWQRPPSYPPLSRAAPCRFFNVSIPRN), are a transit peptide targeting the mitochondrion. The tr-type G domain occupies 60–240 (DRFRNFCIVA…TVVEQIPAPV (181 aa)). GTP-binding positions include 69-76 (AHVDHGKS), 133-137 (DTPGH), and 187-190 (NKVD).

The protein belongs to the TRAFAC class translation factor GTPase superfamily. Classic translation factor GTPase family. LepA subfamily.

It is found in the mitochondrion inner membrane. The enzyme catalyses GTP + H2O = GDP + phosphate + H(+). Functionally, promotes mitochondrial protein synthesis. May act as a fidelity factor of the translation reaction, by catalyzing a one-codon backward translocation of tRNAs on improperly translocated ribosomes. Binds to mitochondrial ribosomes in a GTP-dependent manner. This chain is Translation factor GUF1, mitochondrial, found in Paracoccidioides brasiliensis (strain Pb03).